Consider the following 157-residue polypeptide: Endoribonuclease YbeY (157 aa).

Positions 122, 126, and 132 each coordinate Zn(2+).

The protein belongs to the endoribonuclease YbeY family. Zn(2+) serves as cofactor.

It localises to the cytoplasm. Its function is as follows. Single strand-specific metallo-endoribonuclease involved in late-stage 70S ribosome quality control and in maturation of the 3' terminus of the 16S rRNA. The polypeptide is Endoribonuclease YbeY (Lysinibacillus sphaericus (strain C3-41)).